A 337-amino-acid polypeptide reads, in one-letter code: Transaldolase (337 aa).

The Nuclear localization signal motif lies at 1 to 10 (MSGSPVKRQR). Residue Lys-115 is modified to N6-acetyllysine. The active-site Schiff-base intermediate with substrate is Lys-142. Lys-219 carries the N6-acetyllysine modification. Phosphoserine occurs at positions 237 and 256. Residues Lys-269, Lys-286, and Lys-321 each carry the N6-acetyllysine modification.

It belongs to the transaldolase family. Type 1 subfamily. Homodimer. Interacts with KPNA1 and KPNA4.

It localises to the nucleus. It is found in the cytoplasm. The catalysed reaction is D-sedoheptulose 7-phosphate + D-glyceraldehyde 3-phosphate = D-erythrose 4-phosphate + beta-D-fructose 6-phosphate. It functions in the pathway carbohydrate degradation; pentose phosphate pathway; D-glyceraldehyde 3-phosphate and beta-D-fructose 6-phosphate from D-ribose 5-phosphate and D-xylulose 5-phosphate (non-oxidative stage): step 2/3. In terms of biological role, catalyzes the rate-limiting step of the non-oxidative phase in the pentose phosphate pathway. Catalyzes the reversible conversion of sedheptulose-7-phosphate and D-glyceraldehyde 3-phosphate into erythrose-4-phosphate and beta-D-fructose 6-phosphate. In Cricetulus griseus (Chinese hamster), this protein is Transaldolase (TALDO1).